Consider the following 156-residue polypeptide: SCP2 sterol-binding domain-containing protein 1 (156 aa).

The SCP2 domain maps to Asn44–Ile156.

This Mus musculus (Mouse) protein is SCP2 sterol-binding domain-containing protein 1 (Scp2d1).